Consider the following 268-residue polypeptide: uncharacterized protein (268 aa).

The protein belongs to the LarE family.

This is an uncharacterized protein from Synechocystis sp. (strain ATCC 27184 / PCC 6803 / Kazusa).